A 428-amino-acid chain; its full sequence is Dihydroorotase (428 aa).

Residues histidine 60 and histidine 62 each coordinate Zn(2+). Substrate contacts are provided by residues 62–64 (HLR) and asparagine 94. Zn(2+) is bound by residues aspartate 152, histidine 179, and histidine 232. Residue asparagine 278 coordinates substrate. Position 305 (aspartate 305) interacts with Zn(2+). Aspartate 305 is a catalytic residue. Substrate is bound at residue histidine 309.

This sequence belongs to the metallo-dependent hydrolases superfamily. DHOase family. Class I DHOase subfamily. Zn(2+) is required as a cofactor.

The enzyme catalyses (S)-dihydroorotate + H2O = N-carbamoyl-L-aspartate + H(+). It functions in the pathway pyrimidine metabolism; UMP biosynthesis via de novo pathway; (S)-dihydroorotate from bicarbonate: step 3/3. Functionally, catalyzes the reversible cyclization of carbamoyl aspartate to dihydroorotate. The protein is Dihydroorotase of Ruminiclostridium cellulolyticum (strain ATCC 35319 / DSM 5812 / JCM 6584 / H10) (Clostridium cellulolyticum).